Consider the following 216-residue polypeptide: Transmembrane emp24 domain-containing protein p24delta5 (216 aa).

Residues 1 to 27 (MAINRIAHGSLFLTVVLFFLTVNYGEA) form the signal peptide. Over 28–183 (IWLTIPTTGG…REVSETTNSR (156 aa)) the chain is Lumenal. A GOLD domain is found at 38–151 (TKCVSEEIQS…IEGVELQLRR (114 aa)). N-linked (GlcNAc...) asparagine glycosylation is present at Asn-86. Positions 137-159 (AKKEKIEGVELQLRRLEGLVLSI) form a coiled coil. Residues Arg-169 and Arg-174 each carry the omega-N-methylated arginine modification. The chain crosses the membrane as a helical span at residues 184–204 (VAWFSIMSLGVCVVVVGSQIL). The Cytoplasmic segment spans residues 205-216 (YLKRYFHKKKLI). Residues 209-210 (YF) carry the COPII vesicle coat-binding motif. The short motif at 209 to 216 (YFHKKKLI) is the COPI vesicle coat-binding element.

Belongs to the EMP24/GP25L family. In terms of assembly, probably oligomerizes with other members of the EMP24/GP25L family. Associates with the COPI vesicle coat (coatomer). Associates with the COPII vesicle coat (coatomer). Interacts with p24beta2.

It is found in the endoplasmic reticulum membrane. Functionally, involved in vesicular protein trafficking. Mainly functions in the early secretory pathway. Thought to act as cargo receptor at the lumenal side for incorporation of secretory cargo molecules into transport vesicles and to be involved in vesicle coat formation at the cytoplasmic side. Interacts with p24beta2 at endoplasmic reticulum export sites for endoplasmic reticulum exit and coupled transport to the Golgi apparatus. Once in the Golgi, interacts very efficiently with the COPI machinery for retrograde transport back to the endoplasmic reticulum. The sequence is that of Transmembrane emp24 domain-containing protein p24delta5 from Arabidopsis thaliana (Mouse-ear cress).